The primary structure comprises 396 residues: Elongation factor Tu (396 aa).

A tr-type G domain is found at 10–206; it reads KPHCNIGTIG…QVDAYIPQPE (197 aa). The G1 stretch occupies residues 19 to 26; that stretch reads GHVDHGKT. A GTP-binding site is contributed by 19–26; that stretch reads GHVDHGKT. T26 is a Mg(2+) binding site. Residues 60-64 are G2; that stretch reads GITIS. The segment at 81-84 is G3; it reads DCPG. Residues 81-85 and 136-139 each bind GTP; these read DCPGH and NKVD. Residues 136–139 are G4; the sequence is NKVD. The interval 174-176 is G5; sequence SAL.

It belongs to the TRAFAC class translation factor GTPase superfamily. Classic translation factor GTPase family. EF-Tu/EF-1A subfamily. Monomer.

The protein localises to the cytoplasm. The enzyme catalyses GTP + H2O = GDP + phosphate + H(+). Functionally, GTP hydrolase that promotes the GTP-dependent binding of aminoacyl-tRNA to the A-site of ribosomes during protein biosynthesis. The polypeptide is Elongation factor Tu (Gluconobacter oxydans (strain 621H) (Gluconobacter suboxydans)).